A 387-amino-acid chain; its full sequence is Patatin group D-2 (387 aa).

A signal peptide spans 1-23 (MATTKSFLILIVMILATTSSTFA). Residues 32 to 230 (LSIDGGGIKG…TVADPALLSI (199 aa)) form the PNPLA domain. A GXGXXG motif is present at residues 36 to 41 (GGGIKG). The GXSXG motif lies at 75 to 79 (GTSTG). The active-site Nucleophile is the Ser77. Asn115 carries an N-linked (GlcNAc...) asparagine glycan. The Proton acceptor role is filled by Asp216. The DGA/G signature appears at 216–218 (DGA). Residues 361–385 (ETYEEALKRFAKLLSDRKKLRANKA) adopt a coiled-coil conformation.

This sequence belongs to the patatin family. Tuber.

It localises to the vacuole. Probable lipolytic acyl hydrolase (LAH), an activity which is thought to be involved in the response of tubers to pathogens. In Solanum tuberosum (Potato), this protein is Patatin group D-2.